Reading from the N-terminus, the 505-residue chain is Oxidative stress-induced growth inhibitor 2 (505 aa).

It belongs to the OKL38 family. It depends on NADPH as a cofactor. In terms of tissue distribution, ubiquitous. Expressed at higher levels in testis and ovary.

Its subcellular location is the midbody. In terms of biological role, monooxygenase catalytic activity. May be involved in meiosis or the maturation of germ cells. The polypeptide is Oxidative stress-induced growth inhibitor 2 (Homo sapiens (Human)).